Here is a 384-residue protein sequence, read N- to C-terminus: Spermidine/putrescine import ATP-binding protein PotA (384 aa).

The region spanning 6–238 (IAFQNVSKVF…PINHFVATFI (233 aa)) is the ABC transporter domain. 40–47 (GASGSGKS) contributes to the ATP binding site.

Belongs to the ABC transporter superfamily. Spermidine/putrescine importer (TC 3.A.1.11.1) family. In terms of assembly, the complex is composed of two ATP-binding proteins (PotA), two transmembrane proteins (PotB and PotC) and a solute-binding protein (PotD).

It localises to the cell membrane. The enzyme catalyses ATP + H2O + polyamine-[polyamine-binding protein]Side 1 = ADP + phosphate + polyamineSide 2 + [polyamine-binding protein]Side 1.. Part of the ABC transporter complex PotABCD involved in spermidine/putrescine import. Responsible for energy coupling to the transport system. The sequence is that of Spermidine/putrescine import ATP-binding protein PotA from Streptococcus thermophilus (strain ATCC BAA-491 / LMD-9).